Reading from the N-terminus, the 683-residue chain is Cytochrome P450 monooxygenase htyF (683 aa).

Residues 8–28 (PALLAASVVLAVSLVSYVIQL) traverse the membrane as a helical segment. N-linked (GlcNAc...) asparagine glycosylation occurs at N29. Residue C481 coordinates heme. N581 carries N-linked (GlcNAc...) asparagine glycosylation. Residues 588-608 (LYVFVVLVACVAALFIGIGIY) traverse the membrane as a helical segment.

Belongs to the cytochrome P450 family. Requires heme as cofactor.

The protein resides in the membrane. The protein operates within antifungal biosynthesis. Cytochrome P450 monooxygenase; part of the gene cluster that mediates the de novo generation of L-homotyrosine from acetyl-CoA and 4-hydroxyphenyl-pyruvate. L-homotyrosine is a building block of echinocandin B, a fungal lipidated cyclic hexapeptide that acts as an antifungal agent. L-homotyrosine 4-hydroxyphenyl-pyruvate first undergoes an aldol-type condensation by htyA with the C-2 of acetyl-CoA followed by the release of CoA to form 2-(4-hydroxybenzyl)-malate. This is followed by isomerization of 2-(4-hydroxy-benzyl)-malate to 3-(4-hydroxybenzyl)-malate by htyD. Thereafter, 3-(4-hydroxybenzyl)-malate undergoes decarboxylation and oxidation to form 2-oxo-4-(4-hydroxybenzyl)butanoic acid, coupled to reduction of NAD(+) to NADH by htyC. The product then undergoes transamination catalyzed by htyB to form L-homotyrosine. The sequence is that of Cytochrome P450 monooxygenase htyF from Aspergillus rugulosus (Emericella rugulosa).